The following is a 1170-amino-acid chain: Type I restriction enzyme EcoKI endonuclease subunit (1170 aa).

Positions 143 to 229 (YHQEVLTLKQ…QERKAYHKEI (87 aa)) form a coiled coil. The H-T-H motif DNA-binding region spans 431–450 (NQWFADNPGMSELGLRYYQE). The 182-residue stretch at 458-639 (KAIVKGQQEI…GEPVYRYTYR (182 aa)) folds into the Helicase ATP-binding domain. 472 to 478 (ATGTGKT) contributes to the ATP binding site. A DEAH box motif is present at residues 574–577 (DEAH). The 166-residue stretch at 714 to 879 (ELTNYLDPTG…TLVNEITDSE (166 aa)) folds into the Helicase C-terminal domain.

The protein belongs to the HsdR family. As to quaternary structure, the type I restriction/modification system is composed of three polypeptides R, M and S. The restriction enzyme has stoichiometry R(2)M(2)S(1). The methyltransferase is composed of M(2)S(1). In terms of assembly, (Microbial infection) Interacts with Escherichia phage T7 protein Ocr; this interaction leads to the inhibition of the type I bifunctional endonuclease and methyltransferase restriction enzyme R.EcoKI composed of R(2)M(2)S(1). Upon purification after overexpression about one-third has the initiating methionine removed.

The catalysed reaction is Endonucleolytic cleavage of DNA to give random double-stranded fragments with terminal 5'-phosphates, ATP is simultaneously hydrolyzed.. In terms of biological role, the subtype A restriction (R) subunit of a type I restriction enzyme that recognizes 5'-AACN(6)GTGC-3' and cleaves a random distance away. The R subunit is required for both endonuclease and ATPase activities but not for modification. Has endonucleolytic activity that requires Mg(2+), ATP and S-adenosyl-L-methionine (SAM); ATP can be replaced by dATP, no tested molecule could substitute for SAM. Generates double-stranded DNA with no nicks, by cutting one strand then the other within a few seconds. Cleaves only non-methylated DNA, hemi-methylated and fully methylated DNA are not substrates. After locating a non-methylated recognition site, the enzyme complex serves as a molecular motor that translocates DNA in an ATP-dependent manner until a collision occurs that triggers cleavage. The polypeptide is Type I restriction enzyme EcoKI endonuclease subunit (Escherichia coli (strain K12)).